A 357-amino-acid chain; its full sequence is Protein Wnt-8c (357 aa).

A signal peptide spans 1 to 16; the sequence is MRGSTFLLLSIVGIYG. A disulfide bond links cysteine 55 and cysteine 66. An N-linked (GlcNAc...) asparagine glycan is attached at asparagine 104. Intrachain disulfides connect cysteine 105-cysteine 113, cysteine 115-cysteine 133, cysteine 181-cysteine 195, cysteine 183-cysteine 190, cysteine 260-cysteine 298, cysteine 276-cysteine 291, cysteine 313-cysteine 328, cysteine 315-cysteine 325, and cysteine 320-cysteine 321. Serine 187 is lipidated: O-palmitoleoyl serine. N-linked (GlcNAc...) asparagine glycans are attached at residues asparagine 263 and asparagine 282. Asparagine 346 carries N-linked (GlcNAc...) asparagine glycosylation.

This sequence belongs to the Wnt family. In terms of processing, palmitoleoylation is required for efficient binding to frizzled receptors. Depalmitoleoylation leads to Wnt signaling pathway inhibition. Proteolytic processing by tiki1 and tiki2 promotes oxidation and formation of large disulfide-bond oligomers, leading to inactivation of wnt8c. As to expression, cells that form rhombomere 4. Hensen node and the neural plate immediately anterior to it.

Its subcellular location is the secreted. It is found in the extracellular space. The protein resides in the extracellular matrix. Its function is as follows. Ligand for members of the frizzled family of seven transmembrane receptors. Probable developmental protein. Is likely to signal over only few cell diameters. May be involved in the regulation of axis formation and in the rhombomere specification. The sequence is that of Protein Wnt-8c (WNT8C) from Gallus gallus (Chicken).